The chain runs to 737 residues: Aryl hydrocarbon receptor nuclear translocator 2 (737 aa).

The interval 1–73 is disordered; sequence MATPAAVNPS…SRYDDDQIPG (73 aa). Residues 64 to 73 show a composition bias toward basic and acidic residues; sequence SRYDDDQIPG. The region spanning 78-131 is the bHLH domain; that stretch reads YARENHSEIERRRRNKMTQYITELSDMVPTCSALARKPDKLTILRMAVSHMKSM. 2 PAS domains span residues 149 to 221 and 340 to 406; these read TEQE…ENSM and SMDM…QVVK. A PAC domain is found at 413 to 456; sequence SVMYRFRMKNREWMLIRTSSFTFQNPYSDEIEYIICTNTNVKQL. Disordered regions lie at residues 525 to 556 and 588 to 721; these read MMVPSSTSGGQQLYSQGSPFQPGHSGKSFSSS and QVSW…TTNY. Composition is skewed to polar residues over residues 528 to 543 and 588 to 626; these read PSSTSGGQQLYSQGSP and QVSWSGNRPPFSGQQIPAQSNKAQSSPFGIGSSHSYQAD. Residues 627 to 642 show a composition bias toward low complexity; that stretch reads PSSYSPLSSPATSSPS. The span at 643–656 shows a compositional bias: polar residues; it reads GNAYSNLANRNTAF. A compositionally biased stretch (low complexity) spans 659-688; sequence SGESSQSGGQFQGRPSEVWSQWQSQHHSQQ.

As to quaternary structure, efficient DNA binding requires dimerization with another bHLH protein. Heterodimer with the aryl hydrocarbon receptor (AHR), SIM1 or HIF2A/EPAS-1. Isoform 1 and isoform 2 are most highly expressed in the brain, eye and skeletal muscle and to a lower degree in liver, heart, kidney and swim bladder. Isoform 3 is most highly expressed in the eye, forebrain, midbrain, hindbrain, skeletal muscle, gills and brain but is barely detectable in liver, heart, kidney and swim bladder. Before the pharyngula period isoform 3 is expressed throughout the entire embryo and during this period extensively in the brain and eye.

It is found in the nucleus. Functionally, transcription factor that plays a role in the development of the hypothalamo-pituitary axis. Specifically recognizes the xenobiotic response element (XRE). Isoform 1 acts as a transcriptional activator. Isoform 3 acts as a transcriptional repressor. The protein is Aryl hydrocarbon receptor nuclear translocator 2 of Danio rerio (Zebrafish).